The chain runs to 422 residues: UPF0761 membrane protein LHK_02978 (422 aa).

A run of 6 helical transmembrane segments spans residues 44 to 64 (LLSL…FPVF), 102 to 122 (LTAV…LTID), 141 to 161 (MLVY…GISG), 178 to 198 (LAGI…LTVL), 212 to 232 (ALIG…GFGL), and 246 to 266 (AFAT…TVLI).

It belongs to the UPF0761 family.

The protein resides in the cell inner membrane. This chain is UPF0761 membrane protein LHK_02978, found in Laribacter hongkongensis (strain HLHK9).